A 304-amino-acid chain; its full sequence is DCN1-like protein 3 (304 aa).

Disordered stretches follow at residues 1–87 (MGQC…EESS) and 285–304 (VEGR…EEQT). A lipid anchor (N-myristoyl glycine) is attached at Gly-2. The DCUN1 domain occupies 86–278 (SSLQRLEELF…LFDTFVEWEM (193 aa)).

As to quaternary structure, part of a complex containing DCUN1D3, CUL3 and RBX1. Interacts (via the DCUN1 domain) with the unneddylated cullins: interacts with CUL1, CUL2, CUL3, CUL4A, CUL4B and CUL5; these interactions promote the cullin neddylation and the identity of the cullin dictates the affinity of the interaction. Interacts preferentially with CUL3; this interaction triggers the relocalization of CUL3 to the cell membrane where CUL3 is neddylated. Interacts (via DCUN1 domain) with RBX1. May also interact with regulators or subunits of cullin-RING ligases such as RNF7, ELOB and DDB1; these interactions are bridged by cullins. Interacts (via DCUN1 domain) with CAND1; this interaction is bridged by cullins and strongly inhibits cullin neddylation. These CAND-cullin-DCNL complexes can only be neddylated in the presence of a substrate adapter. Interacts (via DCUN1 domain) with the N-terminally acetylated form of UBE2M and UBE2F.

Its subcellular location is the cell membrane. It is found in the cytoplasm. The protein localises to the nucleus. It localises to the perinuclear region. Its function is as follows. Contributes to the neddylation of all cullins by transferring NEDD8 from N-terminally acetylated NEDD8-conjugating E2s enzyme to different cullin C-terminal domain-RBX complexes and may play a role in the cell cycle progression by regulating the SCF ubiquitin E3 ligase complex, after UV damage. At the cell membrane, can promote and as well inhibit cullins neddylation. This is DCN1-like protein 3 from Rattus norvegicus (Rat).